We begin with the raw amino-acid sequence, 35 residues long: Kappa-stichotoxin-She3a (35 aa).

The 33-residue stretch at 3–35 (CIDTIPKSRCTAFQCKHSMKYRLSFCRKTCGTC) folds into the ShKT domain. 3 cysteine pairs are disulfide-bonded: Cys-3–Cys-35, Cys-12–Cys-28, and Cys-17–Cys-32.

It belongs to the sea anemone type 1 potassium channel toxin family. Type 1a subfamily.

The protein resides in the secreted. The protein localises to the nematocyst. Its function is as follows. Peptide with both antimicrobial and neurotoxin activities. Inhibits voltage-dependent potassium channels. Potently blocks Kv1.1/KCNA1 (IC(50)=6.7-87 pM) and Kv1.3/KCNA3 (IC(50)=10-250 pM). Less potently blocks Kv1.4/KCNA4 (IC(50)=0.31 nM), and Kv1.6/KCNA6 (IC(50)=0.16 nM). Shows moderate activity on Kv1.2/KCNA2 (IC(50)=9 nM), Kv1.7/KCNA7 (IC(50)=11.5 nM), and KCa3.1/KCNN4 (Kd=0.03-30 nM). Blocks Kv channels by binding to a shallow vestibule at the outer entrance to the ion conduction pathway and occluding the entrance to the pore. Shows antibacterial activity against all tested bacteria (the Gram-positive bacteria B.subtilis and S.aureus, and the Gram-negative bacteria S.typhimurium and P.aeruginosa). This chain is Kappa-stichotoxin-She3a, found in Stichodactyla helianthus (Sun anemone).